A 515-amino-acid chain; its full sequence is Pre-glycoprotein polyprotein GP complex (515 aa).

Residue Gly-2 is the site of N-myristoyl glycine; by host attachment. Residues 2 to 17 (GQVIGFFQSLPEIINE) lie on the Extracellular side of the membrane. A helical membrane pass occupies residues 18–33 (ALNIALICVALLATIK). The Cytoplasmic segment spans residues 34-58 (GMVNIWKSGLIQLLFFLTLAGRSCS). Zn(2+) is bound at residue Cys-57. At 59–453 (HSFTIGRFHE…QGRTPLSLVD (395 aa)) the chain is on the extracellular side. Intrachain disulfides connect Cys-87–Cys-255, Cys-300–Cys-313, Cys-322–Cys-331, and Cys-385–Cys-406. 5 N-linked (GlcNAc...) asparagine; by host glycosylation sites follow: Asn-90, Asn-112, Asn-127, Asn-180, and Asn-248. 3 N-linked (GlcNAc...) asparagine; by host glycosylation sites follow: Asn-386, Asn-394, and Asn-416. Residues 454 to 474 (LCFWSTLFYISTLFAHLVGFP) traverse the membrane as a helical segment. Topologically, residues 475 to 515 (THRHLIGEGCPKPHRLTGSGICSCGHYGIPGKPVRWTKMSR) are cytoplasmic. Positions 476, 478, 484, 488, 496, and 498 each coordinate Zn(2+).

This sequence belongs to the arenaviridae GPC protein family. In terms of assembly, interacts with glycoprotein G2. Part of the GP complex (GP-C) together with glycoprotein G1 and glycoprotein G2. The GP-complex interacts with protein Z, which interacts with ribonucleocapsid; these interactions may induce virion budding. As to quaternary structure, homotrimer; disulfide-linked. In pre-fusion state, G1 homotrimers bind G2 homotrimers via ionic interactions. Part of the GP complex (GP-C) together with glycoprotein G2 and the stable signal peptide. The GP-complex interacts with protein Z, which interacts with ribonucleocapsid; these interactions may induce virion budding. Homotrimer. Interacts with the stable signal peptide. In pre-fusion state, G2 homotrimers bind G1 homotrimers via ionic interactions. Part of the GP complex (GP-C) together with glycoprotein G1 and the stable signal peptide. Acidification in the endosome triggers rearrangements, which ultimately leads to a 6 helix bundle formed by the two heptad repeat domains (HR1 and HR2) in post-fusion state. The GP-complex interacts with protein Z, which interacts with ribonucleocapsid; these interactions may induce virion budding. In terms of processing, specific enzymatic cleavages in vivo yield mature proteins. GP-C polyprotein is cleaved in the endoplasmic reticulum by the host protease MBTPS1. Only cleaved glycoprotein is incorporated into virions. Post-translationally, the SSP remains stably associated with the GP complex following cleavage by signal peptidase and plays crucial roles in the trafficking of GP through the secretory pathway. Myristoylation is necessary for GP2-mediated fusion activity.

The protein localises to the virion membrane. It localises to the host endoplasmic reticulum membrane. Its subcellular location is the host Golgi apparatus membrane. The protein resides in the host cell membrane. In terms of biological role, functions as a cleaved signal peptide that is retained as the third component of the GP complex (GP-C). Helps to stabilize the spike complex in its native conformation. The SSP is required for efficient glycoprotein expression, post-translational maturation cleavage of G1 and G2, glycoprotein transport to the cell surface plasma membrane, formation of infectious virus particles, and acid pH-dependent glycoprotein-mediated cell fusion. Its function is as follows. Forms the virion spikes together with glycoprotein G2. The glycoprotein spike trimers are connected to the underlying matrix. Mediates virus attachment to host receptor alpha-dystroglycan DAG1. This attachment induces virion internalization predominantly through clathrin- and caveolin-independent endocytosis. Functionally, forms the virion spikes together with glycoprotein G1. The glycoprotein spike trimers are connected to the underlying matrix. Class I viral fusion protein that directs fusion of viral and host endosomal membranes, leading to delivery of the nucleocapsid into the cytoplasm. Membrane fusion is mediated by irreversible conformational changes induced by acidification. The chain is Pre-glycoprotein polyprotein GP complex from Latino mammarenavirus (isolate Rat/Bolivia/MARU 1924/1965) (LATV).